A 214-amino-acid polypeptide reads, in one-letter code: Cell division protein SepF (214 aa).

A disordered region spans residues 24 to 120 (DNYEEYEERK…NTRRAQESTA (97 aa)). Positions 30–40 (EERKAVNEPPR) are enriched in basic and acidic residues. A compositionally biased stretch (polar residues) spans 55–67 (ESYSQPAYTQQSE). Over residues 69–98 (VVEKPSARYRSAEAHQERDTQQAAYTEKKV) the composition is skewed to basic and acidic residues. A compositionally biased stretch (polar residues) spans 101–120 (MRSSNQSATTNTRRAQESTA).

It belongs to the SepF family. In terms of assembly, homodimer. Interacts with FtsZ.

It localises to the cytoplasm. Its function is as follows. Cell division protein that is part of the divisome complex and is recruited early to the Z-ring. Probably stimulates Z-ring formation, perhaps through the cross-linking of FtsZ protofilaments. Its function overlaps with FtsA. This chain is Cell division protein SepF, found in Enterococcus faecalis (strain ATCC 700802 / V583).